The sequence spans 457 residues: Histidine--tRNA ligase (457 aa).

Belongs to the class-II aminoacyl-tRNA synthetase family. Homodimer.

The protein localises to the cytoplasm. It catalyses the reaction tRNA(His) + L-histidine + ATP = L-histidyl-tRNA(His) + AMP + diphosphate + H(+). The protein is Histidine--tRNA ligase of Mesoplasma florum (strain ATCC 33453 / NBRC 100688 / NCTC 11704 / L1) (Acholeplasma florum).